Here is a 389-residue protein sequence, read N- to C-terminus: Putative serine/threonine-protein kinase (389 aa).

The 342-residue stretch at 15-356 (YRIEKLINRG…LMVSNYLPWY (342 aa)) folds into the Protein kinase domain. Asp164 functions as the Proton acceptor in the catalytic mechanism.

The protein belongs to the protein kinase superfamily. Ser/Thr protein kinase family.

The catalysed reaction is L-seryl-[protein] + ATP = O-phospho-L-seryl-[protein] + ADP + H(+). It carries out the reaction L-threonyl-[protein] + ATP = O-phospho-L-threonyl-[protein] + ADP + H(+). The polypeptide is Putative serine/threonine-protein kinase (Mycoplasma pneumoniae (strain ATCC 29342 / M129 / Subtype 1) (Mycoplasmoides pneumoniae)).